The sequence spans 219 residues: Pyridoxine/pyridoxamine 5'-phosphate oxidase (219 aa).

Substrate is bound by residues 15 to 18 (RRDY) and lysine 73. FMN-binding positions include 68 to 73 (RMVLLK), 83 to 84 (YT), arginine 89, lysine 90, and glutamine 112. Substrate-binding residues include tyrosine 130, arginine 134, and serine 138. Residues 147–148 (QS) and tryptophan 192 contribute to the FMN site. 198 to 200 (RLH) lines the substrate pocket. Arginine 202 serves as a coordination point for FMN.

It belongs to the pyridoxamine 5'-phosphate oxidase family. Homodimer. Requires FMN as cofactor.

The enzyme catalyses pyridoxamine 5'-phosphate + O2 + H2O = pyridoxal 5'-phosphate + H2O2 + NH4(+). The catalysed reaction is pyridoxine 5'-phosphate + O2 = pyridoxal 5'-phosphate + H2O2. Its pathway is cofactor metabolism; pyridoxal 5'-phosphate salvage; pyridoxal 5'-phosphate from pyridoxamine 5'-phosphate: step 1/1. It functions in the pathway cofactor metabolism; pyridoxal 5'-phosphate salvage; pyridoxal 5'-phosphate from pyridoxine 5'-phosphate: step 1/1. Catalyzes the oxidation of either pyridoxine 5'-phosphate (PNP) or pyridoxamine 5'-phosphate (PMP) into pyridoxal 5'-phosphate (PLP). The protein is Pyridoxine/pyridoxamine 5'-phosphate oxidase of Acaryochloris marina (strain MBIC 11017).